The following is a 288-amino-acid chain: NAD(P)H-hydrate epimerase (288 aa).

A mitochondrion-targeting transit peptide spans 1–47 (MSRLRALLGLGLLVAGSRVPRIKSQTIACRSGPTWWGPQRLNSGGRW). Ser-49 is subject to Phosphoserine. Positions 65–275 (AQAVDQELFN…ALEKKYQLNL (211 aa)) constitute a YjeF N-terminal domain. 119 to 123 (NNGGD) lines the (6S)-NADPHX pocket. Asn-120 is a K(+) binding site. Lys-144 is modified (N6-succinyllysine). Asp-185 serves as a coordination point for K(+). (6S)-NADPHX contacts are provided by residues 189 to 195 (GFSFKGD) and Asp-218. Ser-221 lines the K(+) pocket.

The protein belongs to the NnrE/AIBP family. Homodimer. Interacts with APOA1 and APOA2. Requires K(+) as cofactor. Post-translationally, undergoes physiological phosphorylation during sperm capacitation, downstream to PKA activation. As to expression, ubiquitously expressed, with highest levels in kidney, heart and liver. Present in cerebrospinal fluid and urine but not in serum from healthy patients. Present in serum of sepsis patients (at protein level).

The protein localises to the mitochondrion. It localises to the secreted. It carries out the reaction (6R)-NADHX = (6S)-NADHX. The enzyme catalyses (6R)-NADPHX = (6S)-NADPHX. Functionally, catalyzes the epimerization of the S- and R-forms of NAD(P)HX, a damaged form of NAD(P)H that is a result of enzymatic or heat-dependent hydration. This is a prerequisite for the S-specific NAD(P)H-hydrate dehydratase to allow the repair of both epimers of NAD(P)HX. Accelerates cholesterol efflux from endothelial cells to high-density lipoprotein (HDL) and thereby regulates angiogenesis. This chain is NAD(P)H-hydrate epimerase, found in Homo sapiens (Human).